Consider the following 493-residue polypeptide: Glutamate--tRNA ligase (493 aa).

The short motif at 10–20 (PSPTGDPHVGT) is the 'HIGH' region element. Positions 251–255 (KLSKR) match the 'KMSKS' region motif. Lys-254 lines the ATP pocket.

It belongs to the class-I aminoacyl-tRNA synthetase family. Glutamate--tRNA ligase type 1 subfamily. Monomer.

It localises to the cytoplasm. The enzyme catalyses tRNA(Glu) + L-glutamate + ATP = L-glutamyl-tRNA(Glu) + AMP + diphosphate. Catalyzes the attachment of glutamate to tRNA(Glu) in a two-step reaction: glutamate is first activated by ATP to form Glu-AMP and then transferred to the acceptor end of tRNA(Glu). This is Glutamate--tRNA ligase from Pseudomonas putida (strain ATCC 47054 / DSM 6125 / CFBP 8728 / NCIMB 11950 / KT2440).